Reading from the N-terminus, the 223-residue chain is Deoxyribose-phosphate aldolase (223 aa).

The Proton donor/acceptor role is filled by D92. Residue K158 is the Schiff-base intermediate with acetaldehyde of the active site. K188 (proton donor/acceptor) is an active-site residue.

It belongs to the DeoC/FbaB aldolase family. DeoC type 1 subfamily.

The protein localises to the cytoplasm. The catalysed reaction is 2-deoxy-D-ribose 5-phosphate = D-glyceraldehyde 3-phosphate + acetaldehyde. It participates in carbohydrate degradation; 2-deoxy-D-ribose 1-phosphate degradation; D-glyceraldehyde 3-phosphate and acetaldehyde from 2-deoxy-alpha-D-ribose 1-phosphate: step 2/2. Its function is as follows. Catalyzes a reversible aldol reaction between acetaldehyde and D-glyceraldehyde 3-phosphate to generate 2-deoxy-D-ribose 5-phosphate. This Mycolicibacterium paratuberculosis (strain ATCC BAA-968 / K-10) (Mycobacterium paratuberculosis) protein is Deoxyribose-phosphate aldolase.